Consider the following 252-residue polypeptide: MSVEELKDTVHKLHERIQQLEKKVGVLPSSQPDFAKQLRLVLIGAPGSGKGTQSTDLKDKFCACHLATGDMLRSQVKQGTPLGLEAKKIMDQGGLVNDEIMIGMIKQELETNQDCKKGFILDGFPRTIPQAEKLDSMLKDRKTPLENAIELKIDDELLVDRITGRLVHPASGRSYHKIFSPPKKEMTDDITGEPLVQRSDDNEAALKKRLVTYHAQTEPIVEYYKKTGIWQGIDASQKPAKVWKDILKCLGQ.

Residue 47–52 (GSGKGT) coordinates ATP. The tract at residues 67–96 (ATGDMLRSQVKQGTPLGLEAKKIMDQGGLV) is NMP. AMP-binding positions include threonine 68, arginine 73, 94–96 (GLV), 123–126 (GFPR), and glutamine 130. The tract at residues 164-201 (GRLVHPASGRSYHKIFSPPKKEMTDDITGEPLVQRSDD) is LID. Residues arginine 165 and 174-175 (SY) contribute to the ATP site. 2 residues coordinate AMP: arginine 198 and arginine 209. Residue glutamine 237 coordinates ATP.

It belongs to the adenylate kinase family. AK2 subfamily. As to quaternary structure, monomer.

The protein localises to the cytoplasm. Its subcellular location is the cytosol. It is found in the mitochondrion intermembrane space. The enzyme catalyses AMP + ATP = 2 ADP. Catalyzes the reversible transfer of the terminal phosphate group between ATP and AMP. Plays an important role in cellular energy homeostasis and in adenine nucleotide metabolism. Adenylate kinase activity is critical for regulation of the phosphate utilization and the AMP de novo biosynthesis pathways. This Lodderomyces elongisporus (strain ATCC 11503 / CBS 2605 / JCM 1781 / NBRC 1676 / NRRL YB-4239) (Yeast) protein is Adenylate kinase.